Reading from the N-terminus, the 703-residue chain is Prolyl 3-hydroxylase 2 (703 aa).

The N-terminal stretch at 1–21 (MRESTWVSLLLLLLLPTPQRG) is a signal peptide. The interval 17-40 (TPQRGGPQDGRRSPEPEPERGPLQ) is disordered. Basic and acidic residues predominate over residues 25 to 36 (DGRRSPEPEPER). 4 TPR repeats span residues 42–75 (FDLL…HRRL), 144–177 (RVPY…NPEH), 205–238 (HLES…YFNE), and 301–334 (PLHY…HPDN). N-linked (GlcNAc...) asparagine glycosylation is found at Asn-444 and Asn-544. Residues 552–666 (THMVCRTALS…RCAVALWFTL (115 aa)) form the Fe2OG dioxygenase domain. Residues His-575, Asp-577, and His-647 each coordinate Fe cation. Arg-657 is a catalytic residue. A Prevents secretion from ER motif is present at residues 700 to 703 (KDEL).

This sequence belongs to the leprecan family. It depends on Fe cation as a cofactor. The cofactor is L-ascorbate. As to expression, detected in kidney. Detected on kidney tubular cells, pancreas acinar cells, Schwann cells of the peripheral nerve in the pinna, and in tunica adventitia, the smooth muscle layer of the aortic wall (at protein level). Detected in lung, skeletal muscle and kidney. Detected in kidney glomeruli and in prehypertrophic regions of long bone from neonates. In the eye, detected in the epithelial layer of the cornea and at lower levels in the sclera at the posterior end of the eye.

Its subcellular location is the endoplasmic reticulum. It localises to the sarcoplasmic reticulum. The protein localises to the golgi apparatus. It carries out the reaction L-prolyl-[collagen] + 2-oxoglutarate + O2 = trans-3-hydroxy-L-prolyl-[collagen] + succinate + CO2. Its function is as follows. Prolyl 3-hydroxylase that catalyzes the post-translational formation of 3-hydroxyproline on collagens. Contributes to proline 3-hydroxylation of collagen COL4A1 and COL1A1 in tendons, the eye sclera and in the eye lens capsule. Has high activity with the type IV collagen COL4A1, and lower activity with COL1A1. Catalyzes hydroxylation of the first Pro in Gly-Pro-Hyp sequences where Hyp is 4-hydroxyproline. Has no activity on substrates that have proline instead of 4-hydroxyproline in the third position. In Mus musculus (Mouse), this protein is Prolyl 3-hydroxylase 2.